A 1538-amino-acid polypeptide reads, in one-letter code: Dicer-like protein 1 (1538 aa).

Residues 39–72 are disordered; it reads DPAESSADVHKDEHSSDNSDNDNEAVPKPNDFSQ. Residues 45–55 are compositionally biased toward basic and acidic residues; it reads ADVHKDEHSSD. The Helicase ATP-binding domain occupies 134–315; it reads LFERAKTQNT…EAATRLETLL (182 aa). Residue 147 to 154 participates in ATP binding; sequence LDTGSGKT. The short motif at 260-263 is the DEAH box element; sequence DEAH. Residues 460 to 619 form the Helicase C-terminal domain; the sequence is ELSKHFSDTT…ETLPEDRILH (160 aa). One can recognise a Dicer dsRNA-binding fold domain in the interval 652 to 742; the sequence is AIAILARYAS…NSIYHRRLPA (91 aa). In terms of domain architecture, PAZ spans 892–1020; sequence DTVSFVHNND…ICAEPLRISA (129 aa). 2 consecutive RNase III domains span residues 1044–1203 and 1254–1406; these read IALE…LSGG and ARHV…VDSK. Mg(2+)-binding residues include glutamate 1295, aspartate 1392, and glutamate 1395. A DRBM domain is found at 1440–1508; the sequence is TFLHNKLTNE…SEKALAVLDG (69 aa). Residues cysteine 1452, histidine 1479, cysteine 1520, and cysteine 1522 each contribute to the Zn(2+) site.

The protein belongs to the helicase family. Dicer subfamily. Mg(2+) serves as cofactor. Mn(2+) is required as a cofactor.

In terms of biological role, dicer-like endonuclease involved in cleaving double-stranded RNA in the RNA interference (RNAi) pathway. Produces 21 to 25 bp dsRNAs (siRNAs) which target the selective destruction of homologous RNAs leading to sequence-specific suppression of gene expression, called post-transcriptional gene silencing (PTGS). Part of a broad host defense response against viral infection and transposons. The sequence is that of Dicer-like protein 1 (dcl1) from Neosartorya fischeri (strain ATCC 1020 / DSM 3700 / CBS 544.65 / FGSC A1164 / JCM 1740 / NRRL 181 / WB 181) (Aspergillus fischerianus).